A 63-amino-acid polypeptide reads, in one-letter code: Conotoxin Vi5.1a (63 aa).

The first 22 residues, 1-22 (MRCVPVFIILLLLIPSAPSADA), serve as a signal peptide directing secretion. Positions 23 to 50 (QPKTKDDVPLASYHDNAERTLQRLWNQR) are excised as a propeptide. At P62 the chain carries Proline amide.

The protein belongs to the conotoxin T superfamily. Contains 2 disulfide bonds that can be either 'C1-C3, C2-C4' or 'C1-C4, C2-C3', since these disulfide connectivities have been observed for conotoxins with cysteine framework V (for examples, see AC P0DQQ7 and AC P81755). Expressed by the venom duct.

The protein resides in the secreted. The protein is Conotoxin Vi5.1a of Conus virgo (Virgin cone).